Reading from the N-terminus, the 1106-residue chain is Carbamoyl phosphate synthase large chain (1106 aa).

The interval 1-402 is carboxyphosphate synthetic domain; it reads MPRRQDLNSV…ALQKAMRSLE (402 aa). Residues arginine 129, arginine 169, glycine 175, glycine 176, glutamate 208, isoleucine 210, glutamate 215, glycine 241, valine 242, histidine 243, glutamine 285, and glutamate 299 each coordinate ATP. In terms of domain architecture, ATP-grasp 1 spans 133–328; it reads KGVVERCGAE…IAKIATKLSL (196 aa). The Mg(2+) site is built by glutamine 285, glutamate 299, and asparagine 301. Mn(2+)-binding residues include glutamine 285, glutamate 299, and asparagine 301. Positions 403 to 550 are oligomerization domain; that stretch reads QKGSAFSFAR…YHYSSYDRET (148 aa). A carbamoyl phosphate synthetic domain region spans residues 551-953; that stretch reads EVAPHEKPSV…AFAKAQAAAG (403 aa). The ATP-grasp 2 domain occupies 681-872; the sequence is ARVLTEAGLR…MAKAAALIGT (192 aa). ATP-binding residues include arginine 717, lysine 756, leucine 758, glutamate 763, glycine 788, isoleucine 789, histidine 790, serine 791, glutamine 831, and glutamate 843. Mg(2+)-binding residues include glutamine 831, glutamate 843, and asparagine 845. Mn(2+) contacts are provided by glutamine 831, glutamate 843, and asparagine 845. One can recognise an MGS-like domain in the interval 954–1106; that stretch reads GPLPTSGSLF…ERAAQEASRD (153 aa). The allosteric domain stretch occupies residues 954–1106; that stretch reads GPLPTSGSLF…ERAAQEASRD (153 aa).

Belongs to the CarB family. Composed of two chains; the small (or glutamine) chain promotes the hydrolysis of glutamine to ammonia, which is used by the large (or ammonia) chain to synthesize carbamoyl phosphate. Tetramer of heterodimers (alpha,beta)4. Mg(2+) is required as a cofactor. It depends on Mn(2+) as a cofactor.

It carries out the reaction hydrogencarbonate + L-glutamine + 2 ATP + H2O = carbamoyl phosphate + L-glutamate + 2 ADP + phosphate + 2 H(+). The enzyme catalyses hydrogencarbonate + NH4(+) + 2 ATP = carbamoyl phosphate + 2 ADP + phosphate + 2 H(+). It participates in amino-acid biosynthesis; L-arginine biosynthesis; carbamoyl phosphate from bicarbonate: step 1/1. It functions in the pathway pyrimidine metabolism; UMP biosynthesis via de novo pathway; (S)-dihydroorotate from bicarbonate: step 1/3. In terms of biological role, large subunit of the glutamine-dependent carbamoyl phosphate synthetase (CPSase). CPSase catalyzes the formation of carbamoyl phosphate from the ammonia moiety of glutamine, carbonate, and phosphate donated by ATP, constituting the first step of 2 biosynthetic pathways, one leading to arginine and/or urea and the other to pyrimidine nucleotides. The large subunit (synthetase) binds the substrates ammonia (free or transferred from glutamine from the small subunit), hydrogencarbonate and ATP and carries out an ATP-coupled ligase reaction, activating hydrogencarbonate by forming carboxy phosphate which reacts with ammonia to form carbamoyl phosphate. This Kocuria rhizophila (strain ATCC 9341 / DSM 348 / NBRC 103217 / DC2201) protein is Carbamoyl phosphate synthase large chain.